The following is a 249-amino-acid chain: tRNA pseudouridine synthase A (249 aa).

Catalysis depends on D53, which acts as the Nucleophile. Y111 contributes to the substrate binding site.

This sequence belongs to the tRNA pseudouridine synthase TruA family. As to quaternary structure, homodimer.

It catalyses the reaction uridine(38/39/40) in tRNA = pseudouridine(38/39/40) in tRNA. Formation of pseudouridine at positions 38, 39 and 40 in the anticodon stem and loop of transfer RNAs. The sequence is that of tRNA pseudouridine synthase A from Streptococcus sanguinis (strain SK36).